The sequence spans 198 residues: Probable GTP-binding protein EngB (198 aa).

The EngB-type G domain occupies His22–Thr195. GTP-binding positions include Gly30–Ser37, Gly57–Leu61, Asp75–Gly78, Thr142–Asp145, and Tyr174–Ser176. Mg(2+) contacts are provided by Ser37 and Thr59.

This sequence belongs to the TRAFAC class TrmE-Era-EngA-EngB-Septin-like GTPase superfamily. EngB GTPase family. Mg(2+) serves as cofactor.

Its function is as follows. Necessary for normal cell division and for the maintenance of normal septation. This Clostridium botulinum (strain Eklund 17B / Type B) protein is Probable GTP-binding protein EngB.